A 253-amino-acid chain; its full sequence is Triosephosphate isomerase, cytosolic (253 aa).

Substrate is bound by residues Asn10 and Lys12. The Electrophile role is filled by His96. Glu166 (proton acceptor) is an active-site residue.

This sequence belongs to the triosephosphate isomerase family. As to quaternary structure, homodimer.

Its subcellular location is the cytoplasm. It carries out the reaction D-glyceraldehyde 3-phosphate = dihydroxyacetone phosphate. The protein operates within carbohydrate biosynthesis; gluconeogenesis. Its pathway is carbohydrate degradation; glycolysis; D-glyceraldehyde 3-phosphate from glycerone phosphate: step 1/1. This is Triosephosphate isomerase, cytosolic from Coptis japonica (Japanese goldthread).